A 921-amino-acid chain; its full sequence is Dual serine/threonine and tyrosine protein kinase (921 aa).

Positions 645–899 constitute a Protein kinase domain; sequence PKLGRELGRG…PLLGIVEPSL (255 aa). ATP contacts are provided by residues 651-659 and lysine 674; that span reads LGRGQYGVV. The active-site Proton acceptor is the aspartate 770.

Belongs to the protein kinase superfamily. Ser/Thr protein kinase family.

The protein localises to the cytoplasm. It localises to the cell membrane. The protein resides in the apical cell membrane. It is found in the basolateral cell membrane. Its subcellular location is the cell junction. The enzyme catalyses L-seryl-[protein] + ATP = O-phospho-L-seryl-[protein] + ADP + H(+). The catalysed reaction is L-threonyl-[protein] + ATP = O-phospho-L-threonyl-[protein] + ADP + H(+). It carries out the reaction L-tyrosyl-[protein] + ATP = O-phospho-L-tyrosyl-[protein] + ADP + H(+). In terms of biological role, may act as a positive regulator of ERK phosphorylation downstream of fibroblast growth factor-receptor activation. May induce both caspase-dependent apoptosis and caspase-independent cell death. May play a role in the embryonic development. The chain is Dual serine/threonine and tyrosine protein kinase (dstyk) from Takifugu rubripes (Japanese pufferfish).